The primary structure comprises 361 residues: Chorismate synthase (361 aa).

2 residues coordinate NADP(+): arginine 48 and arginine 54. FMN-binding positions include 125–127, 238–239, glycine 278, 293–297, and arginine 319; these read RSS, NA, and KPTSS.

This sequence belongs to the chorismate synthase family. In terms of assembly, homotetramer. It depends on FMNH2 as a cofactor.

It carries out the reaction 5-O-(1-carboxyvinyl)-3-phosphoshikimate = chorismate + phosphate. The protein operates within metabolic intermediate biosynthesis; chorismate biosynthesis; chorismate from D-erythrose 4-phosphate and phosphoenolpyruvate: step 7/7. Its function is as follows. Catalyzes the anti-1,4-elimination of the C-3 phosphate and the C-6 proR hydrogen from 5-enolpyruvylshikimate-3-phosphate (EPSP) to yield chorismate, which is the branch point compound that serves as the starting substrate for the three terminal pathways of aromatic amino acid biosynthesis. This reaction introduces a second double bond into the aromatic ring system. This is Chorismate synthase from Vibrio vulnificus (strain CMCP6).